The following is a 1436-amino-acid chain: MAP kinase kinase kinase win1 (1436 aa).

The segment at 56-85 (LELPNNGKEENHRRPSVARSSSDRSKASAK) is disordered. Positions 76 to 85 (SSDRSKASAK) are enriched in basic and acidic residues. Ser224 carries the post-translational modification Phosphoserine. Thr226 is modified (phosphothreonine). An interaction with tea4 region spans residues 282 to 1123 (EDSDLDSETS…SNITIRWQQG (842 aa)). Residues 1120–1406 (WQQGGLIGSG…AAELLMDPWV (287 aa)) enclose the Protein kinase domain. Residues 1126 to 1134 (IGSGSFGTV) and Lys1149 each bind ATP. Asp1244 serves as the catalytic Proton acceptor.

This sequence belongs to the protein kinase superfamily. STE Ser/Thr protein kinase family. MAP kinase kinase kinase subfamily. Interacts with tea4.

It catalyses the reaction L-seryl-[protein] + ATP = O-phospho-L-seryl-[protein] + ADP + H(+). It carries out the reaction L-threonyl-[protein] + ATP = O-phospho-L-threonyl-[protein] + ADP + H(+). Its function is as follows. Involved in a signal transduction pathway that is activated by changes in the osmolarity of the extracellular environment. Activates the wis1 MAP kinase kinase by phosphorylation. The chain is MAP kinase kinase kinase win1 (win1) from Schizosaccharomyces pombe (strain 972 / ATCC 24843) (Fission yeast).